Here is an 850-residue protein sequence, read N- to C-terminus: Lon protease (850 aa).

Residues 38 to 232 (LPVLPLRDVV…LLVGLVDGEI (195 aa)) form the Lon N-terminal domain. 384 to 391 (GPPGVGKT) lines the ATP pocket. Residues 634 to 815 (ENEIGLVTGL…DEVLDLALER (182 aa)) form the Lon proteolytic domain. Active-site residues include Ser721 and Lys764. The tract at residues 819–850 (PKKAGKEKARKTAPRVAVRGKSRSTPGTRVKH) is disordered. The span at 821–840 (KAGKEKARKTAPRVAVRGKS) shows a compositional bias: basic residues. Over residues 841–850 (RSTPGTRVKH) the composition is skewed to polar residues.

The protein belongs to the peptidase S16 family. Homohexamer. Organized in a ring with a central cavity.

It is found in the cytoplasm. The enzyme catalyses Hydrolysis of proteins in presence of ATP.. In terms of biological role, ATP-dependent serine protease that mediates the selective degradation of mutant and abnormal proteins as well as certain short-lived regulatory proteins. Required for cellular homeostasis and for survival from DNA damage and developmental changes induced by stress. Degrades polypeptides processively to yield small peptide fragments that are 5 to 10 amino acids long. Binds to DNA in a double-stranded, site-specific manner. In Xanthomonas oryzae pv. oryzae (strain KACC10331 / KXO85), this protein is Lon protease.